We begin with the raw amino-acid sequence, 98 residues long: Protein PROLINE CONTENT ALTERNATIVE 22 (98 aa).

As to expression, mainly expressed in flowers, to a lower extent, in roots and, at very low levels, in leaves and stems.

The protein resides in the cytoplasm. Acts as an opponent to RZF1 during early seedling growth in term of proline accumulation in response to dehydration and abscisic acid (ABA). Confers sensitivity to abiotic stresses such as ABA, drought and osmotic stress (e.g. mannitol treatment) by preventing proline accumulation and by reducing the expression of dehydration-inducible genes. Promotes the production of lipid peroxidation by drought stress thus leading to malondialdehyde (MDA) synthesis. Prevents pollen tube elongation. Necessary for RZF1 expression in seedlings. In Arabidopsis thaliana (Mouse-ear cress), this protein is Protein PROLINE CONTENT ALTERNATIVE 22.